The primary structure comprises 213 residues: Orotate phosphoribosyltransferase (213 aa).

A 5-phospho-alpha-D-ribose 1-diphosphate-binding site is contributed by lysine 25. 33 to 34 provides a ligand contact to orotate; that stretch reads FF. Residues 71–72, arginine 98, lysine 99, lysine 102, histidine 104, and 124–132 contribute to the 5-phospho-alpha-D-ribose 1-diphosphate site; these read YK and DDVITSGTA. Threonine 128 and arginine 156 together coordinate orotate.

It belongs to the purine/pyrimidine phosphoribosyltransferase family. PyrE subfamily. As to quaternary structure, homodimer. Requires Mg(2+) as cofactor.

The enzyme catalyses orotidine 5'-phosphate + diphosphate = orotate + 5-phospho-alpha-D-ribose 1-diphosphate. It participates in pyrimidine metabolism; UMP biosynthesis via de novo pathway; UMP from orotate: step 1/2. Its function is as follows. Catalyzes the transfer of a ribosyl phosphate group from 5-phosphoribose 1-diphosphate to orotate, leading to the formation of orotidine monophosphate (OMP). In Buchnera aphidicola subsp. Acyrthosiphon pisum (strain 5A), this protein is Orotate phosphoribosyltransferase.